The chain runs to 295 residues: Carbapenem-hydrolyzing beta-lactamase transcriptional activator (295 aa).

Residues 5–62 (LPLNALRAFEASARYLNFTKAGLELHVSQAAVSQQVRTLEQMLGVALFTRVPRGLQLT) enclose the HTH lysR-type domain. The H-T-H motif DNA-binding region spans 22-41 (FTKAGLELHVSQAAVSQQVR).

Belongs to the LysR transcriptional regulatory family.

In terms of biological role, this protein is a positive regulator of gene expression of carbapenem-hydrolyzing beta-lactamase (NmcA). This Enterobacter cloacae protein is Carbapenem-hydrolyzing beta-lactamase transcriptional activator (nmcR).